We begin with the raw amino-acid sequence, 72 residues long: MKKSILFIFLSVLSFSPFAQDAKPVESSKEKITLESKKCNIAKKSNKSGPESMNSSNYCCELCCNPACTGCY.

The N-terminal stretch at 1 to 19 is a signal peptide; the sequence is MKKSILFIFLSVLSFSPFA. A propeptide spanning residues 20–53 is cleaved from the precursor; that stretch reads QDAKPVESSKEKITLESKKCNIAKKSNKSGPESM. Cystine bridges form between cysteine 59/cysteine 64, cysteine 60/cysteine 68, and cysteine 63/cysteine 71.

Belongs to the heat-stable enterotoxin family.

The protein localises to the secreted. Its function is as follows. Toxin which activates the particulate form of guanylate cyclase and increases cyclic GMP levels within the host intestinal epithelial cells. The polypeptide is Heat-stable enterotoxin A3/A4 (sta3) (Escherichia coli).